We begin with the raw amino-acid sequence, 132 residues long: Small ribosomal subunit protein uS8 (132 aa).

This sequence belongs to the universal ribosomal protein uS8 family. Part of the 30S ribosomal subunit. Contacts proteins S5 and S12.

One of the primary rRNA binding proteins, it binds directly to 16S rRNA central domain where it helps coordinate assembly of the platform of the 30S subunit. This chain is Small ribosomal subunit protein uS8, found in Oceanobacillus iheyensis (strain DSM 14371 / CIP 107618 / JCM 11309 / KCTC 3954 / HTE831).